Reading from the N-terminus, the 364-residue chain is Dihydroorotate dehydrogenase (quinone) (364 aa).

FMN is bound by residues 61-65 and Thr85; that span reads AGYDK. Lys65 serves as a coordination point for substrate. Position 110–114 (110–114) interacts with substrate; it reads NRLGF. FMN is bound by residues Asn139 and Asn170. Asn170 contributes to the substrate binding site. Ser173 acts as the Nucleophile in catalysis. Residue Asn175 coordinates substrate. FMN-binding residues include Lys215 and Ser243. Residue 244-245 participates in substrate binding; that stretch reads NT. FMN contacts are provided by residues Gly266, Gly295, and 316–317; that span reads YT.

This sequence belongs to the dihydroorotate dehydrogenase family. Type 2 subfamily. Monomer. It depends on FMN as a cofactor.

It is found in the cell membrane. It catalyses the reaction (S)-dihydroorotate + a quinone = orotate + a quinol. The protein operates within pyrimidine metabolism; UMP biosynthesis via de novo pathway; orotate from (S)-dihydroorotate (quinone route): step 1/1. In terms of biological role, catalyzes the conversion of dihydroorotate to orotate with quinone as electron acceptor. The protein is Dihydroorotate dehydrogenase (quinone) of Brucella canis (strain ATCC 23365 / NCTC 10854 / RM-666).